Consider the following 614-residue polypeptide: RNA polymerase sigma factor RpoD (614 aa).

Residues 178-222 (THIGSDLSQSERDKDDSKDDSKDDDEDEEEEGPKGPDPEESKERF) are disordered. Residues 186–198 (QSERDKDDSKDDS) show a composition bias toward basic and acidic residues. Residues 199 to 208 (KDDDEDEEEE) show a composition bias toward acidic residues. Basic and acidic residues predominate over residues 209-222 (GPKGPDPEESKERF). A sigma-70 factor domain-2 region spans residues 380-450 (MVEANLRLVI…TRSIADQART (71 aa)). The Interaction with polymerase core subunit RpoC signature appears at 404-407 (DLIQ). Positions 459–535 (ETINKLNRIS…DTTLELPLDS (77 aa)) are sigma-70 factor domain-3. The sigma-70 factor domain-4 stretch occupies residues 548-601 (VLAGLTAREAKVLRMRFGIDMNTDHTLEEVGKQFDVTRERIRQIEAKALRKLRH). The H-T-H motif DNA-binding region spans 574–593 (LEEVGKQFDVTRERIRQIEA).

The protein belongs to the sigma-70 factor family. RpoD/SigA subfamily. As to quaternary structure, interacts transiently with the RNA polymerase catalytic core.

The protein localises to the cytoplasm. Functionally, sigma factors are initiation factors that promote the attachment of RNA polymerase to specific initiation sites and are then released. This sigma factor is the primary sigma factor during exponential growth. In Shewanella violacea (strain JCM 10179 / CIP 106290 / LMG 19151 / DSS12), this protein is RNA polymerase sigma factor RpoD.